Consider the following 298-residue polypeptide: Glycine--tRNA ligase alpha subunit (298 aa).

The protein belongs to the class-II aminoacyl-tRNA synthetase family. Tetramer of two alpha and two beta subunits.

Its subcellular location is the cytoplasm. The catalysed reaction is tRNA(Gly) + glycine + ATP = glycyl-tRNA(Gly) + AMP + diphosphate. This Helicobacter pylori (strain Shi470) protein is Glycine--tRNA ligase alpha subunit.